Consider the following 264-residue polypeptide: Thiazole synthase (264 aa).

Catalysis depends on Lys-104, which acts as the Schiff-base intermediate with DXP. Residues Gly-165, 191–192 (AG), and 213–214 (NT) each bind 1-deoxy-D-xylulose 5-phosphate.

Belongs to the ThiG family. Homotetramer. Forms heterodimers with either ThiH or ThiS.

It is found in the cytoplasm. It catalyses the reaction [ThiS sulfur-carrier protein]-C-terminal-Gly-aminoethanethioate + 2-iminoacetate + 1-deoxy-D-xylulose 5-phosphate = [ThiS sulfur-carrier protein]-C-terminal Gly-Gly + 2-[(2R,5Z)-2-carboxy-4-methylthiazol-5(2H)-ylidene]ethyl phosphate + 2 H2O + H(+). The protein operates within cofactor biosynthesis; thiamine diphosphate biosynthesis. In terms of biological role, catalyzes the rearrangement of 1-deoxy-D-xylulose 5-phosphate (DXP) to produce the thiazole phosphate moiety of thiamine. Sulfur is provided by the thiocarboxylate moiety of the carrier protein ThiS. In vitro, sulfur can be provided by H(2)S. This is Thiazole synthase from Oleidesulfovibrio alaskensis (strain ATCC BAA-1058 / DSM 17464 / G20) (Desulfovibrio alaskensis).